The sequence spans 554 residues: DNA mismatch repair protein MutL (554 aa).

Belongs to the DNA mismatch repair MutL/HexB family.

This protein is involved in the repair of mismatches in DNA. It is required for dam-dependent methyl-directed DNA mismatch repair. May act as a 'molecular matchmaker', a protein that promotes the formation of a stable complex between two or more DNA-binding proteins in an ATP-dependent manner without itself being part of a final effector complex. The polypeptide is DNA mismatch repair protein MutL (Crocosphaera subtropica (strain ATCC 51142 / BH68) (Cyanothece sp. (strain ATCC 51142))).